Here is a 309-residue protein sequence, read N- to C-terminus: Aspartate carbamoyltransferase catalytic subunit (309 aa).

Arg55 and Thr56 together coordinate carbamoyl phosphate. Residue Lys85 participates in L-aspartate binding. Residues Arg106, His135, and Gln138 each contribute to the carbamoyl phosphate site. The L-aspartate site is built by Arg168 and Arg230. Carbamoyl phosphate-binding residues include Leu268 and Pro269.

This sequence belongs to the aspartate/ornithine carbamoyltransferase superfamily. ATCase family. In terms of assembly, heterododecamer (2C3:3R2) of six catalytic PyrB chains organized as two trimers (C3), and six regulatory PyrI chains organized as three dimers (R2).

The catalysed reaction is carbamoyl phosphate + L-aspartate = N-carbamoyl-L-aspartate + phosphate + H(+). It functions in the pathway pyrimidine metabolism; UMP biosynthesis via de novo pathway; (S)-dihydroorotate from bicarbonate: step 2/3. Its function is as follows. Catalyzes the condensation of carbamoyl phosphate and aspartate to form carbamoyl aspartate and inorganic phosphate, the committed step in the de novo pyrimidine nucleotide biosynthesis pathway. This is Aspartate carbamoyltransferase catalytic subunit from Vibrio cholerae serotype O1 (strain ATCC 39541 / Classical Ogawa 395 / O395).